The following is a 313-amino-acid chain: Biotin synthase (313 aa).

A Radical SAM core domain is found at 28–258; that stretch reads NFGNDIELCS…LFPQARLRLS (231 aa). [4Fe-4S] cluster is bound by residues cysteine 46, cysteine 50, and cysteine 53. 4 residues coordinate [2Fe-2S] cluster: cysteine 90, cysteine 121, cysteine 181, and arginine 256.

Belongs to the radical SAM superfamily. Biotin synthase family. As to quaternary structure, homodimer. [4Fe-4S] cluster is required as a cofactor. [2Fe-2S] cluster serves as cofactor.

It carries out the reaction (4R,5S)-dethiobiotin + (sulfur carrier)-SH + 2 reduced [2Fe-2S]-[ferredoxin] + 2 S-adenosyl-L-methionine = (sulfur carrier)-H + biotin + 2 5'-deoxyadenosine + 2 L-methionine + 2 oxidized [2Fe-2S]-[ferredoxin]. It participates in cofactor biosynthesis; biotin biosynthesis; biotin from 7,8-diaminononanoate: step 2/2. Catalyzes the conversion of dethiobiotin (DTB) to biotin by the insertion of a sulfur atom into dethiobiotin via a radical-based mechanism. This is Biotin synthase from Francisella tularensis subsp. holarctica (strain FTNF002-00 / FTA).